A 342-amino-acid chain; its full sequence is 4-hydroxy-2-oxovalerate aldolase (342 aa).

Residues 7 to 259 enclose the Pyruvate carboxyltransferase domain; that stretch reads ILVHDMSLRD…CTGVDLGRIQ (253 aa). 15–16 contacts substrate; it reads RD. Aspartate 16 is a Mn(2+) binding site. Histidine 19 serves as the catalytic Proton acceptor. Substrate-binding residues include serine 169 and histidine 198. The Mn(2+) site is built by histidine 198 and histidine 200. Tyrosine 289 is a substrate binding site.

It belongs to the 4-hydroxy-2-oxovalerate aldolase family.

It catalyses the reaction (S)-4-hydroxy-2-oxopentanoate = acetaldehyde + pyruvate. The sequence is that of 4-hydroxy-2-oxovalerate aldolase from Alkalilimnicola ehrlichii (strain ATCC BAA-1101 / DSM 17681 / MLHE-1).